Here is a 63-residue protein sequence, read N- to C-terminus: Large ribosomal subunit protein uL29 (63 aa).

Belongs to the universal ribosomal protein uL29 family.

In Shewanella halifaxensis (strain HAW-EB4), this protein is Large ribosomal subunit protein uL29.